The chain runs to 108 residues: Iron-sulfur cluster assembly protein CyaY (108 aa).

It belongs to the frataxin family.

In terms of biological role, involved in iron-sulfur (Fe-S) cluster assembly. May act as a regulator of Fe-S biogenesis. This is Iron-sulfur cluster assembly protein CyaY from Pseudoalteromonas atlantica (strain T6c / ATCC BAA-1087).